The primary structure comprises 253 residues: Ras-like protein family member 11A-like (253 aa).

GTP contacts are provided by residues 43-50 (GASNVGKT), 90-97 (DTPCVSLQ), and 157-160 (NKSD). Residues 213 to 233 (GNGEKRKGGLHLARPKSPNMQ) form a disordered region.

The protein belongs to the small GTPase superfamily. Ras family.

The protein resides in the nucleus. It localises to the nucleolus. It catalyses the reaction GTP + H2O = GDP + phosphate + H(+). Its function is as follows. Regulator of rDNA transcription. This is Ras-like protein family member 11A-like from Danio rerio (Zebrafish).